A 259-amino-acid polypeptide reads, in one-letter code: UPF0246 protein PST_1170 (259 aa).

It belongs to the UPF0246 family.

The sequence is that of UPF0246 protein PST_1170 from Stutzerimonas stutzeri (strain A1501) (Pseudomonas stutzeri).